The following is a 428-amino-acid chain: Bacteriochlorophyll synthase 44.5 kDa chain (428 aa).

12 helical membrane-spanning segments follow: residues 3–23 (LGWL…AVVV), 32–52 (LMVV…ALHY), 73–93 (FFVI…AVAV), 115–135 (GFGV…ATEP), 144–164 (ITWL…GHFL), 172–192 (LLWI…LAVW), 225–245 (AFTF…LILE), 269–289 (GVFF…IGSL), 291–311 (GWVV…VALG), 317–337 (ALVP…VAAI), 358–378 (LWGA…AGAA), and 393–413 (LVFG…TGVV).

It belongs to the PucC family.

Its subcellular location is the membrane. It participates in porphyrin-containing compound metabolism; bacteriochlorophyll biosynthesis (light-independent). The polypeptide is Bacteriochlorophyll synthase 44.5 kDa chain (Rhodobacter capsulatus (strain ATCC BAA-309 / NBRC 16581 / SB1003)).